The sequence spans 300 residues: Small ribosomal subunit protein uS2 (300 aa).

The interval 269 to 300 (WEADGADWAASSAAAPAESWAAEAQGAEGAKW) is disordered.

This sequence belongs to the universal ribosomal protein uS2 family. Component of the small ribosomal subunit. Mature ribosomes consist of a small (40S) and a large (60S) subunit. The 40S subunit contains about 33 different proteins and 1 molecule of RNA (18S). The 60S subunit contains about 49 different proteins and 3 molecules of RNA (25S, 5.8S and 5S). Interacts with rps21.

The protein localises to the cytoplasm. In terms of biological role, required for the assembly and/or stability of the 40S ribosomal subunit. Required for the processing of the 20S rRNA-precursor to mature 18S rRNA in a late step of the maturation of 40S ribosomal subunits. The sequence is that of Small ribosomal subunit protein uS2 (rps0) from Aspergillus terreus (strain NIH 2624 / FGSC A1156).